The following is a 169-amino-acid chain: Small ribosomal subunit protein bS18c (169 aa).

Residues 1–61 (MYTSKQPFLK…RRPRIGPGDR (61 aa)) form a disordered region. Positions 27 to 55 (QTFRKSKQTFRKFKQPFRKSKQPFRRRPR) are enriched in basic residues.

It belongs to the bacterial ribosomal protein bS18 family. Part of the 30S ribosomal subunit.

The protein resides in the plastid. Its subcellular location is the chloroplast. This is Small ribosomal subunit protein bS18c from Agrostis stolonifera (Creeping bentgrass).